The chain runs to 248 residues: Probable transcriptional regulatory protein Acel_1346 (248 aa).

Belongs to the TACO1 family.

The protein localises to the cytoplasm. The protein is Probable transcriptional regulatory protein Acel_1346 of Acidothermus cellulolyticus (strain ATCC 43068 / DSM 8971 / 11B).